The sequence spans 355 residues: MEDLEETLFEEFENYSYALDYYSLESDLEEKVQLGVVHWVSLVLYCLSFVLGIPGNAIVIWFTGFKWKKTVSTLWFLNLAIADFIFLLFLPLYISYVVMNFHWPFGIWLCKANSFTAQLNMFASVFFLTVISLDHYIHLIHPVLSHRHRTLKNSLIVIIFIWLLASLIGGPALYFRDTVEFNNHTLCYNNFQKHDPDLTVIRHHVLTWVKFIVGYLFPLLTMSICYLCLIFKVKKRSILISSRHFWTILAVVVAFVVCWTPYHLFSIWELTIHHNSYSHHVMQAGIPLSTGLAFLNSCLNPILYVLISKKFQARFRSSVAEILKYTLWEVSCSGTVSEQLRNSETKNLCLLETAQ.

Over 1 to 41 (MEDLEETLFEEFENYSYALDYYSLESDLEEKVQLGVVHWVS) the chain is Extracellular. Residue Asn14 is glycosylated (N-linked (GlcNAc...) asparagine). Residues 42-62 (LVLYCLSFVLGIPGNAIVIWF) form a helical membrane-spanning segment. Residues 63–73 (TGFKWKKTVST) lie on the Cytoplasmic side of the membrane. A helical transmembrane segment spans residues 74 to 94 (LWFLNLAIADFIFLLFLPLYI). The Extracellular portion of the chain corresponds to 95 to 112 (SYVVMNFHWPFGIWLCKA). Cys110 and Cys187 are disulfide-bonded. Residues 113 to 133 (NSFTAQLNMFASVFFLTVISL) traverse the membrane as a helical segment. Residues 134-154 (DHYIHLIHPVLSHRHRTLKNS) lie on the Cytoplasmic side of the membrane. The helical transmembrane segment at 155–175 (LIVIIFIWLLASLIGGPALYF) threads the bilayer. Over 176-210 (RDTVEFNNHTLCYNNFQKHDPDLTVIRHHVLTWVK) the chain is Extracellular. The chain crosses the membrane as a helical span at residues 211–231 (FIVGYLFPLLTMSICYLCLIF). Topologically, residues 232-247 (KVKKRSILISSRHFWT) are cytoplasmic. The chain crosses the membrane as a helical span at residues 248–268 (ILAVVVAFVVCWTPYHLFSIW). Residues 269 to 286 (ELTIHHNSYSHHVMQAGI) lie on the Extracellular side of the membrane. The helical transmembrane segment at 287–307 (PLSTGLAFLNSCLNPILYVLI) threads the bilayer. The Cytoplasmic portion of the chain corresponds to 308–355 (SKKFQARFRSSVAEILKYTLWEVSCSGTVSEQLRNSETKNLCLLETAQ).

This sequence belongs to the chemokine-like receptor (CMKLR) family.

The protein localises to the cell membrane. Functionally, receptor for chemoattractant adipokine chemerin/RARRES2 suggesting a role for this receptor in the regulation of inflammation and energy homesotasis. Signals mainly via beta-arrestin pathway. Binding of RARRES2 activates weakly G proteins, calcium mobilization and MAPK1/MAPK3 (ERK1/2) phosphorylation too. Acts also as a receptor for TAFA1, mediates its effects on neuronal stem-cell proliferation and differentiation via the activation of ROCK/ERK and ROCK/STAT3 signaling pathway. The chain is Chemerin-like receptor 2 (CMKLR2) from Macaca mulatta (Rhesus macaque).